The chain runs to 206 residues: Thymidylate kinase (206 aa).

14-21 (GGEGIGKS) provides a ligand contact to ATP.

The protein belongs to the thymidylate kinase family.

The catalysed reaction is dTMP + ATP = dTDP + ADP. Its function is as follows. Phosphorylation of dTMP to form dTDP in both de novo and salvage pathways of dTTP synthesis. The polypeptide is Thymidylate kinase (Rickettsia bellii (strain RML369-C)).